A 547-amino-acid chain; its full sequence is Myrosinase 2 (547 aa).

The signal sequence occupies residues 1–28 (MQHNTYIYILTMKLLGFALAILLVVATC). 3 cysteine pairs are disulfide-bonded: C36–C460, C44–C456, and C236–C244. Residues Q69, H171, and 216-217 (NQ) each bind a beta-D-glucoside. An N-linked (GlcNAc...) asparagine glycan is attached at N340. Residue Y359 coordinates a beta-D-glucoside. N-linked (GlcNAc...) asparagine glycosylation is present at N384. Residues E430, W479, 486 to 487 (EF), and F495 contribute to the a beta-D-glucoside site. The Nucleophile role is filled by E430. N504 carries N-linked (GlcNAc...) asparagine glycosylation.

This sequence belongs to the glycosyl hydrolase 1 family. Interacts with MVP1. As to expression, expressed in phloem-associated cells.

It catalyses the reaction a thioglucoside + H2O = a sugar + a thiol.. Its function is as follows. May degrade glucosinolates (glucose residue linked by a thioglucoside bound to an amino acid derivative) to glucose, sulfate and any of the products: thiocyanates, isothiocyanates, nitriles, epithionitriles or oxazolidine-2-thiones. These toxic degradation products can deter insect herbivores. Seems to function in abscisic acid (ABA) and methyl jasmonate (MeJA) signaling in guard cells. Functionally redundant with TGG1. This Arabidopsis thaliana (Mouse-ear cress) protein is Myrosinase 2.